Here is a 490-residue protein sequence, read N- to C-terminus: ABC transporter ATP-binding protein ModF (490 aa).

2 ABC transporter domains span residues 4–235 and 261–489; these read LQIL…AHSE and IVLN…LTKI. ATP is bound by residues 36-43 and 293-300; these read GSNGSGKS and GPNGAGKS.

This sequence belongs to the ABC transporter superfamily.

Its subcellular location is the cell inner membrane. Functionally, probably not involved in the transport of molybdenum into the cell. The sequence is that of ABC transporter ATP-binding protein ModF (modF) from Escherichia coli (strain K12).